The chain runs to 441 residues: Hexane cyclase gkaB (441 aa).

A signal peptide spans 1–25 (MTKFLAGAAIVLAVAFGSFFSQSST). N-linked (GlcNAc...) asparagine glycosylation is found at Asn77, Asn153, Asn184, and Asn308.

Belongs to the Diels-Alderase family.

It participates in mycotoxin biosynthesis. In terms of biological role, hexane cyclase; part of the gene cluster that mediates the biosynthesis of GKK1032, fungal natural products containing a macrocyclic para-cyclophane connected to a decahydrofluorene ring system that show potent antitumor activities. Within the pathway, gkaB functions synergistically with gkaX and gkaZ to form the cyclophane. The pathway begins with the PKS-NRPS gkaA which, with the help of the trans-enoyl reductase gkaC, synthesizes the polyketide-tyrosyl acyl thioester product which can be reductively off-loaded by the terminal reductase (R) domain in gkaA. The alpha/beta hydrolase gkaG is then required to catalyze the subsequent Knoevenagel condensation that affords the 3-pyrrolin-2-one ring, whereas the three proteins gkaB, gkaX and gkaZ then function synergistically to form the cyclophane. The protein is Hexane cyclase gkaB of Penicillium citrinum.